Consider the following 593-residue polypeptide: Dihydroxy-acid dehydratase (593 aa).

Over residues 1 to 17 (MSQQTEPDDDAALDGDE) the composition is skewed to acidic residues. The tract at residues 1–40 (MSQQTEPDDDAALDGDEPGAYGKDERLRSREVTEGPERAP) is disordered. Basic and acidic residues predominate over residues 22-40 (GKDERLRSREVTEGPERAP). C72 is a binding site for [2Fe-2S] cluster. A Mg(2+)-binding site is contributed by D104. [2Fe-2S] cluster is bound at residue C145. Mg(2+) contacts are provided by D146 and K147. An N6-carboxylysine modification is found at K147. C217 contacts [2Fe-2S] cluster. A Mg(2+)-binding site is contributed by E475. Catalysis depends on S501, which acts as the Proton acceptor.

The protein belongs to the IlvD/Edd family. Homodimer. Requires [2Fe-2S] cluster as cofactor. Mg(2+) serves as cofactor.

The catalysed reaction is (2R)-2,3-dihydroxy-3-methylbutanoate = 3-methyl-2-oxobutanoate + H2O. It carries out the reaction (2R,3R)-2,3-dihydroxy-3-methylpentanoate = (S)-3-methyl-2-oxopentanoate + H2O. It participates in amino-acid biosynthesis; L-isoleucine biosynthesis; L-isoleucine from 2-oxobutanoate: step 3/4. The protein operates within amino-acid biosynthesis; L-valine biosynthesis; L-valine from pyruvate: step 3/4. Functionally, functions in the biosynthesis of branched-chain amino acids. Catalyzes the dehydration of (2R,3R)-2,3-dihydroxy-3-methylpentanoate (2,3-dihydroxy-3-methylvalerate) into 2-oxo-3-methylpentanoate (2-oxo-3-methylvalerate) and of (2R)-2,3-dihydroxy-3-methylbutanoate (2,3-dihydroxyisovalerate) into 2-oxo-3-methylbutanoate (2-oxoisovalerate), the penultimate precursor to L-isoleucine and L-valine, respectively. The polypeptide is Dihydroxy-acid dehydratase (Natronomonas pharaonis (strain ATCC 35678 / DSM 2160 / CIP 103997 / JCM 8858 / NBRC 14720 / NCIMB 2260 / Gabara) (Halobacterium pharaonis)).